The primary structure comprises 437 residues: GTPase Obg (437 aa).

Positions 2 to 160 (SMFLDTAKVS…RQLELELKIL (159 aa)) constitute an Obg domain. An OBG-type G domain is found at 161 to 338 (ADVGLVGFPS…LLEATAELLA (178 aa)). GTP-binding positions include 167 to 174 (GFPSVGKS), 192 to 196 (FTTIV), 214 to 217 (DLPG), 284 to 287 (NKMD), and 319 to 321 (SSL). Ser-174 and Thr-194 together coordinate Mg(2+). One can recognise an OCT domain in the interval 359–437 (GFAAEEKAFE…IGKFEFEFVD (79 aa)).

This sequence belongs to the TRAFAC class OBG-HflX-like GTPase superfamily. OBG GTPase family. In terms of assembly, monomer. It depends on Mg(2+) as a cofactor.

The protein resides in the cytoplasm. Its function is as follows. An essential GTPase which binds GTP, GDP and possibly (p)ppGpp with moderate affinity, with high nucleotide exchange rates and a fairly low GTP hydrolysis rate. Plays a role in control of the cell cycle, stress response, ribosome biogenesis and in those bacteria that undergo differentiation, in morphogenesis control. The polypeptide is GTPase Obg (Streptococcus equi subsp. equi (strain 4047)).